Here is an 84-residue protein sequence, read N- to C-terminus: CDC42 small effector protein 2 (84 aa).

S-palmitoyl cysteine attachment occurs at residues Cys-10 and Cys-11. One can recognise a CRIB domain in the interval 29-42 (IGEPTNFVHTAHVG). A phosphoserine mark is found at Ser-43 and Ser-52.

Belongs to the CDC42SE/SPEC family. In terms of assembly, interacts with CDC42 (in GTP-bound form). Interacts weakly with RAC1 and not at all with RHOA. As to expression, widely expressed. Expressed at higher level in T-lymphocytes. Highly expressed in CCRF-CEM T-lymphocytes, Jurkat T-lymphocytes, and Raji B-lymphocytes compared (at protein level).

It localises to the cytoplasm. The protein resides in the cytoskeleton. The protein localises to the cell membrane. Its subcellular location is the cell projection. It is found in the phagocytic cup. Probably involved in the organization of the actin cytoskeleton by acting downstream of CDC42, inducing actin filament assembly. Alters CDC42-induced cell shape changes. In activated T-cells, may play a role in CDC42-mediated F-actin accumulation at the immunological synapse. May play a role in early contractile events in phagocytosis in macrophages. The polypeptide is CDC42 small effector protein 2 (CDC42SE2) (Homo sapiens (Human)).